The chain runs to 357 residues: UDP-N-acetylglucosamine--N-acetylmuramyl-(pentapeptide) pyrophosphoryl-undecaprenol N-acetylglucosamine transferase (357 aa).

Residues 12–14 (TGG), N124, R162, S190, I244, 263–268 (ALTVAE), and Q289 contribute to the UDP-N-acetyl-alpha-D-glucosamine site.

This sequence belongs to the glycosyltransferase 28 family. MurG subfamily.

Its subcellular location is the cell inner membrane. The enzyme catalyses di-trans,octa-cis-undecaprenyl diphospho-N-acetyl-alpha-D-muramoyl-L-alanyl-D-glutamyl-meso-2,6-diaminopimeloyl-D-alanyl-D-alanine + UDP-N-acetyl-alpha-D-glucosamine = di-trans,octa-cis-undecaprenyl diphospho-[N-acetyl-alpha-D-glucosaminyl-(1-&gt;4)]-N-acetyl-alpha-D-muramoyl-L-alanyl-D-glutamyl-meso-2,6-diaminopimeloyl-D-alanyl-D-alanine + UDP + H(+). It functions in the pathway cell wall biogenesis; peptidoglycan biosynthesis. In terms of biological role, cell wall formation. Catalyzes the transfer of a GlcNAc subunit on undecaprenyl-pyrophosphoryl-MurNAc-pentapeptide (lipid intermediate I) to form undecaprenyl-pyrophosphoryl-MurNAc-(pentapeptide)GlcNAc (lipid intermediate II). This chain is UDP-N-acetylglucosamine--N-acetylmuramyl-(pentapeptide) pyrophosphoryl-undecaprenol N-acetylglucosamine transferase, found in Alkalilimnicola ehrlichii (strain ATCC BAA-1101 / DSM 17681 / MLHE-1).